Reading from the N-terminus, the 343-residue chain is DNA polymerase III subunit delta (343 aa).

3 domain regions span residues 1-140 (MIRL…VTCQ), 141-210 (TPEQ…NDAA), and 211-343 (HFTP…FIDG).

It belongs to the DNA polymerase HolA subunit family. The DNA polymerase III holoenzyme complex contains at least 10 different subunits organized into 3 functionally essential subassemblies: the Pol III core, the beta sliding clamp processivity factor and the clamp-loading complex. The Pol III core (subunits alpha, epsilon and theta) contains the polymerase and the 3'-5' exonuclease proofreading activities. The polymerase is tethered to the template via the dimeric beta sliding clamp processivity factor. The clamp-loading complex (also called gamma complex) assembles the beta sliding clamp onto the primed template and plays a central role in the organization and communication at the replication fork. The clamp-loading complex contains delta, delta', psi and chi, and 3 copies of either or both of two different DnaX proteins, gamma and tau. The DNA replisome complex has a single clamp loader (3 tau and 1 each of delta, delta', psi and chi subunits) which binds 3 Pol III cores (1 core on the leading strand and 2 on the lagging strand) each with a beta sliding clamp dimer. Additional proteins in the replisome are other copies of gamma, psi and chi, Ssb, DNA helicase and RNA primase. The clamp loader hydrolyzes ATP to assemble the beta processivity factor onto the primed template and plays a central role in the organization and communication at the replication fork; the minimal complex to load the beta sliding clamp on DNA is delta, delta', gamma.

It carries out the reaction DNA(n) + a 2'-deoxyribonucleoside 5'-triphosphate = DNA(n+1) + diphosphate. In terms of biological role, part of the beta sliding clamp loading complex, which hydrolyzes ATP to load the beta clamp onto primed DNA to form the DNA replication pre-initiation complex. DNA polymerase III is a complex, multichain enzyme responsible for most of the replicative synthesis in bacteria. This DNA polymerase also exhibits 3'-5' exonuclease activity. The delta subunit is the wrench that will open the beta subunit dimer, which has been modeled to leave a gap large enough for ssDNA to pass through. The gamma complex (gamma(3),delta,delta') is thought to load beta dimers onto DNA by binding ATP which alters the complex's conformation so it can bind beta sliding clamp dimers and open them at one interface. Primed DNA is recognized, ATP is hydrolyzed releasing the gamma complex and closing the beta sliding clamp ring around the primed DNA. The sequence is that of DNA polymerase III subunit delta (holA) from Escherichia coli (strain K12).